The primary structure comprises 342 residues: N-acetyl-gamma-glutamyl-phosphate reductase (342 aa).

The active site involves Cys147.

This sequence belongs to the NAGSA dehydrogenase family. Type 1 subfamily.

Its subcellular location is the cytoplasm. It carries out the reaction N-acetyl-L-glutamate 5-semialdehyde + phosphate + NADP(+) = N-acetyl-L-glutamyl 5-phosphate + NADPH + H(+). The protein operates within amino-acid biosynthesis; L-arginine biosynthesis; N(2)-acetyl-L-ornithine from L-glutamate: step 3/4. Functionally, catalyzes the NADPH-dependent reduction of N-acetyl-5-glutamyl phosphate to yield N-acetyl-L-glutamate 5-semialdehyde. The sequence is that of N-acetyl-gamma-glutamyl-phosphate reductase from Campylobacter jejuni subsp. doylei (strain ATCC BAA-1458 / RM4099 / 269.97).